The sequence spans 162 residues: NADH-quinone oxidoreductase subunit C (162 aa).

It belongs to the complex I 30 kDa subunit family. NDH-1 is composed of 14 different subunits. Subunits NuoB, C, D, E, F, and G constitute the peripheral sector of the complex.

It is found in the cell inner membrane. It catalyses the reaction a quinone + NADH + 5 H(+)(in) = a quinol + NAD(+) + 4 H(+)(out). NDH-1 shuttles electrons from NADH, via FMN and iron-sulfur (Fe-S) centers, to quinones in the respiratory chain. The immediate electron acceptor for the enzyme in this species is believed to be ubiquinone. Couples the redox reaction to proton translocation (for every two electrons transferred, four hydrogen ions are translocated across the cytoplasmic membrane), and thus conserves the redox energy in a proton gradient. The polypeptide is NADH-quinone oxidoreductase subunit C (Geobacter sulfurreducens (strain ATCC 51573 / DSM 12127 / PCA)).